Here is a 129-residue protein sequence, read N- to C-terminus: METKNAKAIARKVSIAPRKARLVVDLIRGKNIAQAQAILTFTPKVAAPVILKLLNSAVSNAVNNLKLNREQLYVKEVFVNEGFRLKRMFPRAKGSGDMIKKRTSHITLVITSSTNLQTSKEEEQSGSKN.

This sequence belongs to the universal ribosomal protein uL22 family. Part of the 50S ribosomal subunit.

Its function is as follows. This protein binds specifically to 23S rRNA; its binding is stimulated by other ribosomal proteins, e.g. L4, L17, and L20. It is important during the early stages of 50S assembly. It makes multiple contacts with different domains of the 23S rRNA in the assembled 50S subunit and ribosome. Functionally, the globular domain of the protein is located near the polypeptide exit tunnel on the outside of the subunit, while an extended beta-hairpin is found that lines the wall of the exit tunnel in the center of the 70S ribosome. The polypeptide is Large ribosomal subunit protein uL22 (Aster yellows witches'-broom phytoplasma (strain AYWB)).